A 321-amino-acid chain; its full sequence is Lipoyl synthase (321 aa).

Positions 68, 73, 79, 94, 98, 101, and 308 each coordinate [4Fe-4S] cluster. Positions 80–297 constitute a Radical SAM core domain; the sequence is FNHGTATFMI…KAEAMAMGFT (218 aa).

This sequence belongs to the radical SAM superfamily. Lipoyl synthase family. The cofactor is [4Fe-4S] cluster.

It is found in the cytoplasm. It catalyses the reaction [[Fe-S] cluster scaffold protein carrying a second [4Fe-4S](2+) cluster] + N(6)-octanoyl-L-lysyl-[protein] + 2 oxidized [2Fe-2S]-[ferredoxin] + 2 S-adenosyl-L-methionine + 4 H(+) = [[Fe-S] cluster scaffold protein] + N(6)-[(R)-dihydrolipoyl]-L-lysyl-[protein] + 4 Fe(3+) + 2 hydrogen sulfide + 2 5'-deoxyadenosine + 2 L-methionine + 2 reduced [2Fe-2S]-[ferredoxin]. It functions in the pathway protein modification; protein lipoylation via endogenous pathway; protein N(6)-(lipoyl)lysine from octanoyl-[acyl-carrier-protein]: step 2/2. Catalyzes the radical-mediated insertion of two sulfur atoms into the C-6 and C-8 positions of the octanoyl moiety bound to the lipoyl domains of lipoate-dependent enzymes, thereby converting the octanoylated domains into lipoylated derivatives. The polypeptide is Lipoyl synthase (Enterobacter sp. (strain 638)).